Consider the following 356-residue polypeptide: Solute carrier family 25 member 3 (356 aa).

Residues Met1–Ala44 constitute a mitochondrion transit peptide. Topologically, residues Ala45–Lys57 are mitochondrial intermembrane. Solcar repeat units follow at residues Lys57–Leu141, Trp154–Ala238, and Glu255–Tyr333. The chain crosses the membrane as a helical span at residues Tyr58 to Leu80. At Asp81–Lys115 the chain is on the mitochondrial matrix side. Lys93 is modified (N6-acetyllysine). An N6-methyllysine modification is found at Lys106. Residues Gly116–Tyr135 form a helical membrane-spanning segment. Topologically, residues Glu136–Arg155 are mitochondrial intermembrane. Residues Thr156–Met177 traverse the membrane as a helical segment. Residues Glu178–Lys212 lie on the Mitochondrial matrix side of the membrane. Tyr190 is subject to Phosphotyrosine. Lys203 is subject to N6-acetyllysine. A helical membrane pass occupies residues Gly213 to Phe232. Over Glu233 to Glu255 the chain is Mitochondrial intermembrane. A helical membrane pass occupies residues Gln256–Ala278. At Asp279–Gly308 the chain is on the mitochondrial matrix side. The helical transmembrane segment at Leu309 to Tyr327 threads the bilayer. The Mitochondrial intermembrane portion of the chain corresponds to Asp328–Glu356.

This sequence belongs to the mitochondrial carrier (TC 2.A.29) family. Interacts with PPIF; the interaction is impaired by CsA.

Its subcellular location is the mitochondrion inner membrane. It catalyses the reaction phosphate(in) + H(+)(in) = phosphate(out) + H(+)(out). Inorganic ion transporter that transports phosphate or copper ions across the mitochondrial inner membrane into the matrix compartment. Mediates proton-coupled symport of phosphate ions necessary for mitochondrial oxidative phosphorylation of ADP to ATP. Transports copper ions probably in the form of anionic copper(I) complexes to maintain mitochondrial matrix copper pool and to supply copper for cytochrome C oxidase complex assembly. May also play a role in regulation of the mitochondrial permeability transition pore (mPTP). The protein is Solute carrier family 25 member 3 of Rattus norvegicus (Rat).